Reading from the N-terminus, the 297-residue chain is Large ribosomal subunit protein uL18 (297 aa).

A Glycyl lysine isopeptide (Lys-Gly) (interchain with G-Cter in ubiquitin) cross-link involves residue Lys-164. 3 positions are modified to phosphoserine: Ser-167, Ser-176, and Ser-235.

The protein belongs to the universal ribosomal protein uL18 family. In terms of assembly, component of the large ribosomal subunit (LSU). Mature yeast ribosomes consist of a small (40S) and a large (60S) subunit. The 40S small subunit contains 1 molecule of ribosomal RNA (18S rRNA) and 33 different proteins (encoded by 57 genes). The large 60S subunit contains 3 rRNA molecules (25S, 5.8S and 5S rRNA) and 46 different proteins (encoded by 81 genes). Component of a hexameric 5S RNP precursor complex, composed of 5S RNA, RRS1, RPF2, RPL5, RPL11A/RPL11B and SYO1; this complex acts as a precursor for ribosome assembly. RPL5/uL18 forms a heterotrimeric complex with SYO1 and RPL11A/RPL11B/uL5. Interaction of this complex with KAP104 allows the nuclear import of the heterotrimer.

The protein resides in the cytoplasm. Its subcellular location is the nucleus. In terms of biological role, component of the ribosome, a large ribonucleoprotein complex responsible for the synthesis of proteins in the cell. The small ribosomal subunit (SSU) binds messenger RNAs (mRNAs) and translates the encoded message by selecting cognate aminoacyl-transfer RNA (tRNA) molecules. The large subunit (LSU) contains the ribosomal catalytic site termed the peptidyl transferase center (PTC), which catalyzes the formation of peptide bonds, thereby polymerizing the amino acids delivered by tRNAs into a polypeptide chain. The nascent polypeptides leave the ribosome through a tunnel in the LSU and interact with protein factors that function in enzymatic processing, targeting, and the membrane insertion of nascent chains at the exit of the ribosomal tunnel. This is Large ribosomal subunit protein uL18 from Saccharomyces cerevisiae (strain ATCC 204508 / S288c) (Baker's yeast).